A 414-amino-acid chain; its full sequence is COUP transcription factor 2 (414 aa).

The disordered stretch occupies residues 1–72 (MAMVVSTWRD…PGGPGSDKQQ (72 aa)). The span at 27 to 37 (PPVPGPPPGAP) shows a compositional bias: pro residues. Residues 38–57 (HTPQTPGQGGPASTPAQTAA) show a composition bias toward low complexity. Residue Thr51 is modified to Phosphothreonine. Positions 58-67 (GGQGGPGGPG) are enriched in gly residues. A DNA-binding region (nuclear receptor) is located at residues 76 to 151 (HIECVVCGDK…VGMRREAVQR (76 aa)). 2 consecutive NR C4-type zinc fingers follow at residues 79–99 (CVVCGDKSSGKHYGQFTCEGC) and 115–139 (CRANRNCPIDQHHRNQCQYCRLKKC). The segment at 117-414 (ANRNCPIDQH…SFNWPYMAIQ (298 aa)) is interaction with ZFPM2. In terms of domain architecture, NR LBD spans 177-403 (YLSGYISLLL…TLIRDMLLSG (227 aa)). The important for dimerization stretch occupies residues 337 to 414 (LQEKSQCALE…SFNWPYMAIQ (78 aa)).

It belongs to the nuclear hormone receptor family. NR2 subfamily. In terms of assembly, interacts with SQSTM1. Binds DNA as a dimer; homodimer or heterodimer with NR2F6. Interacts with NCOA1, NCOA2, NCOA3 and PPARGC1A. Interacts with ZFPM2.

Its subcellular location is the nucleus. Functionally, ligand-activated transcription factor. Activated by high concentrations of 9-cis-retinoic acid and all-trans-retinoic acid, but not by dexamethasone, cortisol or progesterone (in vitro). Regulation of the apolipoprotein A-I gene transcription. Binds to DNA site A. May be required to establish ovary identity during early gonad development. The chain is COUP transcription factor 2 (NR2F2) from Bos taurus (Bovine).